An 82-amino-acid polypeptide reads, in one-letter code: Putative defensin-like protein 48 (82 aa).

A signal peptide spans 1–28; that stretch reads MGIKTLIIFFHIFILAVLSSNNIILTSG. Disulfide bonds link C39-C80, C43-C67, C53-C78, and C57-C79.

The protein belongs to the DEFL family.

It localises to the secreted. The protein is Putative defensin-like protein 48 of Arabidopsis thaliana (Mouse-ear cress).